The sequence spans 227 residues: MAHAAQVGLQDATSPIMEELITFHDHALMIIFLICFLVLYALFLTLTTKLTNTNISDAQEMETVWTILPAIILVLIALPSLRILYMTDEVNDPSLTIKSIGHQWYWTYEYTDYGGLIFNSYMLPPLFLEPGDLRLLDVDNRVVLPIEAPIRMMITSQDVLHSWAVPTLGLKTDAIPGRLNQTTFTATRPGVYYGQCSEICGANHSFMPIVLELIPLKIFEMGPVFTL.

Residues 1–14 (MAHAAQVGLQDATS) lie on the Mitochondrial intermembrane side of the membrane. Residues 15–45 (PIMEELITFHDHALMIIFLICFLVLYALFLT) traverse the membrane as a helical segment. At 46-59 (LTTKLTNTNISDAQ) the chain is on the mitochondrial matrix side. A helical membrane pass occupies residues 60-87 (EMETVWTILPAIILVLIALPSLRILYMT). At 88 to 227 (DEVNDPSLTI…IFEMGPVFTL (140 aa)) the chain is on the mitochondrial intermembrane side. Residues His161, Cys196, Glu198, Cys200, His204, and Met207 each coordinate Cu cation. Glu198 lines the Mg(2+) pocket.

Belongs to the cytochrome c oxidase subunit 2 family. In terms of assembly, component of the cytochrome c oxidase (complex IV, CIV), a multisubunit enzyme composed of 14 subunits. The complex is composed of a catalytic core of 3 subunits MT-CO1, MT-CO2 and MT-CO3, encoded in the mitochondrial DNA, and 11 supernumerary subunits COX4I1 (or COX4I2), COX5A, COX5B, COX6A1 (or COX6A2), COX6B1 (or COX6B2), COX6C, COX7A2 (or COX7A1), COX7B, COX7C, COX8A and NDUFA4, which are encoded in the nuclear genome. The complex exists as a monomer or a dimer and forms supercomplexes (SCs) in the inner mitochondrial membrane with NADH-ubiquinone oxidoreductase (complex I, CI) and ubiquinol-cytochrome c oxidoreductase (cytochrome b-c1 complex, complex III, CIII), resulting in different assemblies (supercomplex SCI(1)III(2)IV(1) and megacomplex MCI(2)III(2)IV(2)). Found in a complex with TMEM177, COA6, COX18, COX20, SCO1 and SCO2. Interacts with TMEM177 in a COX20-dependent manner. Interacts with COX20. Interacts with COX16. It depends on Cu cation as a cofactor.

Its subcellular location is the mitochondrion inner membrane. The catalysed reaction is 4 Fe(II)-[cytochrome c] + O2 + 8 H(+)(in) = 4 Fe(III)-[cytochrome c] + 2 H2O + 4 H(+)(out). Component of the cytochrome c oxidase, the last enzyme in the mitochondrial electron transport chain which drives oxidative phosphorylation. The respiratory chain contains 3 multisubunit complexes succinate dehydrogenase (complex II, CII), ubiquinol-cytochrome c oxidoreductase (cytochrome b-c1 complex, complex III, CIII) and cytochrome c oxidase (complex IV, CIV), that cooperate to transfer electrons derived from NADH and succinate to molecular oxygen, creating an electrochemical gradient over the inner membrane that drives transmembrane transport and the ATP synthase. Cytochrome c oxidase is the component of the respiratory chain that catalyzes the reduction of oxygen to water. Electrons originating from reduced cytochrome c in the intermembrane space (IMS) are transferred via the dinuclear copper A center (CU(A)) of subunit 2 and heme A of subunit 1 to the active site in subunit 1, a binuclear center (BNC) formed by heme A3 and copper B (CU(B)). The BNC reduces molecular oxygen to 2 water molecules using 4 electrons from cytochrome c in the IMS and 4 protons from the mitochondrial matrix. In Homo sapiens (Human), this protein is Cytochrome c oxidase subunit 2 (MT-CO2).